The sequence spans 260 residues: GDNF family receptor alpha-4 (260 aa).

The signal sequence occupies residues 1–23; it reads MAHCMESALLLLLLLGSASFTDG. N-linked (GlcNAc...) asparagine glycosylation is present at Asn184. Thr237 is lipidated: GPI-anchor amidated threonine. The propeptide at 238–260 is removed in mature form; it reads AGCCFPRVSWLYALTALALQALL.

The protein belongs to the GDNFR family. As to quaternary structure, interacts with ARTN ligand and RET: forms a 2:2:2 ternary complex composed of ARTN ligand, GFRA3 and RET receptor. Interacts with SORL1. In terms of tissue distribution, expressed in many tissues including adrenal medulla, brain neurons, with highest levels in the cerebral cortex and hippocampus. Moderate levels found in the gut circular muscle and myenteric ganglia as well as in other peripheral ganglia, including the sensory dorsal root and trigeminal as well as superior cervical and sympathetic chain ganglia. Isoform a1, isoform a2, isoform b1 and isoform b2 are exclusively found in the thyroid, parthyroid and pituitary glands.

It is found in the cell membrane. Its subcellular location is the secreted. Its function is as follows. Receptor for persephin (PSPN), a growth factor that exhibits neurotrophic activity on mesencephalic dopaminergic and motor neurons. Acts by binding to its coreceptor, GFRA4, leading to autophosphorylation and activation of the RET receptor. May be important in C-cell development and, in the postnatal development of the adrenal medulla. The protein is GDNF family receptor alpha-4 (Gfra4) of Mus musculus (Mouse).